The following is a 376-amino-acid chain: tRNA pseudouridine synthase C (376 aa).

The active site involves aspartate 168.

It in the C-terminal section; belongs to the pseudouridine synthase RluA family. The protein to E.coli YqcC in the N-terminal section.

It carries out the reaction uridine(65) in tRNA = pseudouridine(65) in tRNA. Responsible for synthesis of pseudouridine from uracil-65 in transfer RNAs. The protein is tRNA pseudouridine synthase C (truC) of Pectobacterium carotovorum subsp. carotovorum (Erwinia carotovora subsp. carotovora).